Reading from the N-terminus, the 165-residue chain is Ribosome maturation factor RimM (165 aa).

Residues 89–161 (EADTHYIVDL…KIVVKPVRQW (73 aa)) enclose the PRC barrel domain.

The protein belongs to the RimM family. Binds ribosomal protein uS19.

The protein localises to the cytoplasm. Functionally, an accessory protein needed during the final step in the assembly of 30S ribosomal subunit, possibly for assembly of the head region. Essential for efficient processing of 16S rRNA. May be needed both before and after RbfA during the maturation of 16S rRNA. It has affinity for free ribosomal 30S subunits but not for 70S ribosomes. The polypeptide is Ribosome maturation factor RimM (Clostridium botulinum (strain Alaska E43 / Type E3)).